Consider the following 293-residue polypeptide: Probable xyloglucan endotransglucosylase/hydrolase protein 7 (293 aa).

The first 29 residues, 1–29, serve as a signal peptide directing secretion; sequence MVVSLFSSRNVFYTLSLCLFAALYQPVMS. Positions 30–223 constitute a GH16 domain; sequence RPAKFEDDFR…WSRAPFYAYY (194 aa). Glu-109 (nucleophile) is an active-site residue. Residue Glu-113 is the Proton donor of the active site. Glu-113 is a xyloglucan binding site. N-linked (GlcNAc...) asparagine glycosylation is present at Asn-117. Residues 126–128, 136–138, 202–203, and Gly-207 each bind xyloglucan; these read QTN, DRE, and DW. The N-linked (GlcNAc...) asparagine glycan is linked to Asn-213. Disulfide bonds link Cys-231–Cys-239 and Cys-276–Cys-289. Arg-281 is a xyloglucan binding site.

The protein belongs to the glycosyl hydrolase 16 family. XTH group 1 subfamily. Contains at least one intrachain disulfide bond essential for its enzymatic activity.

It is found in the secreted. The protein resides in the cell wall. It localises to the extracellular space. The protein localises to the apoplast. The catalysed reaction is breaks a beta-(1-&gt;4) bond in the backbone of a xyloglucan and transfers the xyloglucanyl segment on to O-4 of the non-reducing terminal glucose residue of an acceptor, which can be a xyloglucan or an oligosaccharide of xyloglucan.. Its function is as follows. Catalyzes xyloglucan endohydrolysis (XEH) and/or endotransglycosylation (XET). Cleaves and religates xyloglucan polymers, an essential constituent of the primary cell wall, and thereby participates in cell wall construction of growing tissues. The sequence is that of Probable xyloglucan endotransglucosylase/hydrolase protein 7 (XTH7) from Arabidopsis thaliana (Mouse-ear cress).